The following is a 129-amino-acid chain: Integration host factor subunit alpha (129 aa).

The tract at residues 87-129 (SALNGEAPPEDHAEIDAREEAAADAAEARGEDFDEEGMEDMEG) is disordered. Over residues 95–117 (PEDHAEIDAREEAAADAAEARGE) the composition is skewed to basic and acidic residues. Residues 118–129 (DFDEEGMEDMEG) are compositionally biased toward acidic residues.

It belongs to the bacterial histone-like protein family. As to quaternary structure, heterodimer of an alpha and a beta chain.

Functionally, this protein is one of the two subunits of integration host factor, a specific DNA-binding protein that functions in genetic recombination as well as in transcriptional and translational control. It is necessary for normal cell growth and the production of carotenoids in response to light. This chain is Integration host factor subunit alpha (ihfA), found in Myxococcus xanthus.